A 186-amino-acid polypeptide reads, in one-letter code: UPF0301 protein APL_0232 (186 aa).

Belongs to the UPF0301 (AlgH) family.

The sequence is that of UPF0301 protein APL_0232 from Actinobacillus pleuropneumoniae serotype 5b (strain L20).